Consider the following 452-residue polypeptide: Phosphoglucosamine mutase (452 aa).

Ser-108 serves as the catalytic Phosphoserine intermediate. The Mg(2+) site is built by Ser-108, Asp-247, Asp-249, and Asp-251. Ser-108 carries the post-translational modification Phosphoserine.

Belongs to the phosphohexose mutase family. It depends on Mg(2+) as a cofactor. In terms of processing, activated by phosphorylation.

It carries out the reaction alpha-D-glucosamine 1-phosphate = D-glucosamine 6-phosphate. Catalyzes the conversion of glucosamine-6-phosphate to glucosamine-1-phosphate. The sequence is that of Phosphoglucosamine mutase from Burkholderia pseudomallei (strain 668).